Consider the following 459-residue polypeptide: Limonoid 7-O-acetyltransferse (459 aa).

Catalysis depends on proton acceptor residues His-167 and Asp-391.

Belongs to the plant acyltransferase family. As to quaternary structure, monomer. In terms of tissue distribution, expressed in maturing fruits and in juice vesicles.

The enzyme catalyses (1S)-1-acetoxy-luvungin A + acetyl-CoA = (1S)-1,7-diacetoxy-luvungin A + CoA. It functions in the pathway secondary metabolite biosynthesis; terpenoid biosynthesis. In terms of biological role, acetyltransferase involved in the biosynthesis of limonoids triterpene natural products such as limonin, a compound with insecticidal activity responsible for the bitter taste in citrus. Catalyzes the formation of (1S)-1,7-diacetoxy-luvungin A from (1S)-1-acetoxy-luvungin A. This Citrus sinensis (Sweet orange) protein is Limonoid 7-O-acetyltransferse.